We begin with the raw amino-acid sequence, 303 residues long: ATP phosphoribosyltransferase (303 aa).

This sequence belongs to the ATP phosphoribosyltransferase family. Long subfamily. Mg(2+) serves as cofactor.

The protein localises to the cytoplasm. It catalyses the reaction 1-(5-phospho-beta-D-ribosyl)-ATP + diphosphate = 5-phospho-alpha-D-ribose 1-diphosphate + ATP. The protein operates within amino-acid biosynthesis; L-histidine biosynthesis; L-histidine from 5-phospho-alpha-D-ribose 1-diphosphate: step 1/9. Feedback inhibited by histidine. Its function is as follows. Catalyzes the condensation of ATP and 5-phosphoribose 1-diphosphate to form N'-(5'-phosphoribosyl)-ATP (PR-ATP). Has a crucial role in the pathway because the rate of histidine biosynthesis seems to be controlled primarily by regulation of HisG enzymatic activity. In Haemophilus influenzae (strain PittGG), this protein is ATP phosphoribosyltransferase.